Here is a 508-residue protein sequence, read N- to C-terminus: Photosystem II CP47 reaction center protein (508 aa).

6 helical membrane passes run 21–36 (SVHI…WAGS), 101–115 (IVFS…IWHW), 140–156 (GIHL…FGAF), 203–218 (IAAG…FHLS), 237–252 (VLSS…AFVV), and 457–472 (SFAL…HGSR).

It belongs to the PsbB/PsbC family. PsbB subfamily. In terms of assembly, PSII is composed of 1 copy each of membrane proteins PsbA, PsbB, PsbC, PsbD, PsbE, PsbF, PsbH, PsbI, PsbJ, PsbK, PsbL, PsbM, PsbT, PsbX, PsbY, PsbZ, Psb30/Ycf12, at least 3 peripheral proteins of the oxygen-evolving complex and a large number of cofactors. It forms dimeric complexes. It depends on Binds multiple chlorophylls. PSII binds additional chlorophylls, carotenoids and specific lipids. as a cofactor.

The protein resides in the plastid. It is found in the chloroplast thylakoid membrane. One of the components of the core complex of photosystem II (PSII). It binds chlorophyll and helps catalyze the primary light-induced photochemical processes of PSII. PSII is a light-driven water:plastoquinone oxidoreductase, using light energy to abstract electrons from H(2)O, generating O(2) and a proton gradient subsequently used for ATP formation. This Capsella bursa-pastoris (Shepherd's purse) protein is Photosystem II CP47 reaction center protein.